We begin with the raw amino-acid sequence, 354 residues long: Biotin synthase (354 aa).

Residues 41-265 (NEVQISRLLS…LMPHSRVRLS (225 aa)) form the Radical SAM core domain. 3 residues coordinate [4Fe-4S] cluster: C56, C60, and C63. 4 residues coordinate [2Fe-2S] cluster: C100, C131, C191, and R263.

It belongs to the radical SAM superfamily. Biotin synthase family. In terms of assembly, homodimer. [4Fe-4S] cluster is required as a cofactor. The cofactor is [2Fe-2S] cluster.

The enzyme catalyses (4R,5S)-dethiobiotin + (sulfur carrier)-SH + 2 reduced [2Fe-2S]-[ferredoxin] + 2 S-adenosyl-L-methionine = (sulfur carrier)-H + biotin + 2 5'-deoxyadenosine + 2 L-methionine + 2 oxidized [2Fe-2S]-[ferredoxin]. It functions in the pathway cofactor biosynthesis; biotin biosynthesis; biotin from 7,8-diaminononanoate: step 2/2. In terms of biological role, catalyzes the conversion of dethiobiotin (DTB) to biotin by the insertion of a sulfur atom into dethiobiotin via a radical-based mechanism. The chain is Biotin synthase from Shewanella woodyi (strain ATCC 51908 / MS32).